Reading from the N-terminus, the 261-residue chain is Indole-3-glycerol phosphate synthase (261 aa).

The protein belongs to the TrpC family.

It carries out the reaction 1-(2-carboxyphenylamino)-1-deoxy-D-ribulose 5-phosphate + H(+) = (1S,2R)-1-C-(indol-3-yl)glycerol 3-phosphate + CO2 + H2O. It functions in the pathway amino-acid biosynthesis; L-tryptophan biosynthesis; L-tryptophan from chorismate: step 4/5. The protein is Indole-3-glycerol phosphate synthase of Burkholderia multivorans (strain ATCC 17616 / 249).